A 707-amino-acid chain; its full sequence is Ribosomal RNA large subunit methyltransferase K/L (707 aa).

Positions 44 to 155 (VIYNLCLWSR…NDILTVSFDL (112 aa)) constitute a THUMP domain.

The protein belongs to the methyltransferase superfamily. RlmKL family.

The protein localises to the cytoplasm. The enzyme catalyses guanosine(2445) in 23S rRNA + S-adenosyl-L-methionine = N(2)-methylguanosine(2445) in 23S rRNA + S-adenosyl-L-homocysteine + H(+). It catalyses the reaction guanosine(2069) in 23S rRNA + S-adenosyl-L-methionine = N(2)-methylguanosine(2069) in 23S rRNA + S-adenosyl-L-homocysteine + H(+). Its function is as follows. Specifically methylates the guanine in position 2445 (m2G2445) and the guanine in position 2069 (m7G2069) of 23S rRNA. This Legionella pneumophila (strain Corby) protein is Ribosomal RNA large subunit methyltransferase K/L.